The following is a 367-amino-acid chain: MEKSSIYGLTWTKLTEWLEAHGQKKFRATQVWDWLYRKRVKTFEEMSNVPKETIELLTANFVMNTLEEQVVQESTDGTTKYLFKLSDGNLIETVMMKQEYGLSVCVTTQVGCNIGCTFCASGLLKKSRDLTAGEIVEQIMNVQHYLDGRNLEERVSHVVVMGIGEPFDNYDNVMDFLRVINHDKGLAIGARHITVSTSGLAPRIIDFANEDFQVNLAISLHAPNNELRTSIMRINKTYSIEKLMEAIHYYVNKTNRRITFEYIMLKGVNDHKKEALELAALLGEHRHLAYVNLIPYNPVDEHIDYERSTKEDVLAFYDTLKKNGINCVIRREHGTDIDAACGQLRSKQIKRVGVRERMKQKQAAAEE.

Glu-92 serves as the catalytic Proton acceptor. The Radical SAM core domain maps to 98 to 326 (QEYGLSVCVT…YDTLKKNGIN (229 aa)). Cys-105 and Cys-341 form a disulfide bridge. [4Fe-4S] cluster is bound by residues Cys-112, Cys-116, and Cys-119. Residues 164–165 (GE), Ser-196, 219–221 (SLH), and Asn-297 contribute to the S-adenosyl-L-methionine site. Cys-341 functions as the S-methylcysteine intermediate in the catalytic mechanism.

This sequence belongs to the radical SAM superfamily. RlmN family. The cofactor is [4Fe-4S] cluster.

The protein localises to the cytoplasm. It catalyses the reaction adenosine(2503) in 23S rRNA + 2 reduced [2Fe-2S]-[ferredoxin] + 2 S-adenosyl-L-methionine = 2-methyladenosine(2503) in 23S rRNA + 5'-deoxyadenosine + L-methionine + 2 oxidized [2Fe-2S]-[ferredoxin] + S-adenosyl-L-homocysteine. The enzyme catalyses adenosine(37) in tRNA + 2 reduced [2Fe-2S]-[ferredoxin] + 2 S-adenosyl-L-methionine = 2-methyladenosine(37) in tRNA + 5'-deoxyadenosine + L-methionine + 2 oxidized [2Fe-2S]-[ferredoxin] + S-adenosyl-L-homocysteine. Functionally, specifically methylates position 2 of adenine 2503 in 23S rRNA and position 2 of adenine 37 in tRNAs. This Listeria innocua serovar 6a (strain ATCC BAA-680 / CLIP 11262) protein is Probable dual-specificity RNA methyltransferase RlmN.